Here is a 222-residue protein sequence, read N- to C-terminus: Sperm acrosome-associated protein 9 (222 aa).

The tract at residues 164-222 is disordered; the sequence is QHVSEPQAHQESTRGAARPAQAIGTQPRATKHKCRQLTKASLKPRGCSKPPWRPPGGKL.

As to quaternary structure, microtubule inner protein component of sperm flagellar doublet microtubules. Interacts with CABP1 and CALR. Interacts with INCA1. Interacts with microtubules.

The protein localises to the cytoplasm. It is found in the cytoplasmic vesicle. The protein resides in the secretory vesicle. Its subcellular location is the acrosome. It localises to the cytoskeleton. The protein localises to the cilium basal body. It is found in the flagellum axoneme. The protein resides in the cilium axoneme. Its subcellular location is the nucleus. Its function is as follows. Microtubule inner protein (MIP) part of the dynein-decorated doublet microtubules (DMTs) of multiciliated respiratory cells and the distal singlet microtubules of monoflagellated spermatozoa. Forms an extensive interaction network cross-linking the lumen of axonemal doublet microtubules. The protein is Sperm acrosome-associated protein 9 of Homo sapiens (Human).